Consider the following 374-residue polypeptide: Muconate cycloisomerase 1 (374 aa).

It belongs to the cycloisomerase 2 family. In terms of assembly, homotetramer.

It catalyses the reaction (S)-muconolactone = cis,cis-muconate + H(+). Its pathway is aromatic compound metabolism; beta-ketoadipate pathway; 5-oxo-4,5-dihydro-2-furylacetate from catechol: step 2/3. In terms of biological role, catalyzes a syn cycloisomerization. The chain is Muconate cycloisomerase 1 from Cutaneotrichosporon cutaneum (Yeast).